Here is a 130-residue protein sequence, read N- to C-terminus: NADH-quinone oxidoreductase subunit A (130 aa).

Transmembrane regions (helical) follow at residues 17-37 (YIFVGLFFVVACFISCVMLAL), 74-94 (LVGILFIIFDLEIIFLFPWAV), and 99-119 (LGPAAFVSVLIFLIILTVGFV).

Belongs to the complex I subunit 3 family. As to quaternary structure, NDH-1 is composed of 14 different subunits. Subunits NuoA, H, J, K, L, M, N constitute the membrane sector of the complex.

It is found in the cell inner membrane. It carries out the reaction a quinone + NADH + 5 H(+)(in) = a quinol + NAD(+) + 4 H(+)(out). NDH-1 shuttles electrons from NADH, via FMN and iron-sulfur (Fe-S) centers, to quinones in the respiratory chain. The immediate electron acceptor for the enzyme in this species is believed to be ubiquinone. Couples the redox reaction to proton translocation (for every two electrons transferred, four hydrogen ions are translocated across the cytoplasmic membrane), and thus conserves the redox energy in a proton gradient. This chain is NADH-quinone oxidoreductase subunit A, found in Neorickettsia sennetsu (strain ATCC VR-367 / Miyayama) (Ehrlichia sennetsu).